The primary structure comprises 87 residues: UPF0335 protein RHECIAT_CH0003797 (87 aa).

It belongs to the UPF0335 family.

The sequence is that of UPF0335 protein RHECIAT_CH0003797 from Rhizobium etli (strain CIAT 652).